The chain runs to 546 residues: Chaperonin GroEL (546 aa).

ATP contacts are provided by residues 30 to 33 (TLGP), Lys-51, 87 to 91 (DGTTT), Gly-415, 479 to 481 (NAA), and Asp-495.

Belongs to the chaperonin (HSP60) family. In terms of assembly, forms a cylinder of 14 subunits composed of two heptameric rings stacked back-to-back. Interacts with the co-chaperonin GroES.

Its subcellular location is the cytoplasm. It catalyses the reaction ATP + H2O + a folded polypeptide = ADP + phosphate + an unfolded polypeptide.. In terms of biological role, together with its co-chaperonin GroES, plays an essential role in assisting protein folding. The GroEL-GroES system forms a nano-cage that allows encapsulation of the non-native substrate proteins and provides a physical environment optimized to promote and accelerate protein folding. In Xanthomonas axonopodis pv. citri (strain 306), this protein is Chaperonin GroEL.